Reading from the N-terminus, the 439-residue chain is NAD kinase (439 aa).

A phosphoserine mark is found at Ser46, Ser48, Ser50, Ser55, and Ser64.

This sequence belongs to the NAD kinase family. It depends on a divalent metal cation as a cofactor.

It carries out the reaction NAD(+) + ATP = ADP + NADP(+) + H(+). This chain is NAD kinase (Nadk), found in Mus musculus (Mouse).